Consider the following 248-residue polypeptide: Probable transcriptional regulatory protein Psyr_1407 (248 aa).

The protein belongs to the TACO1 family.

The protein resides in the cytoplasm. This chain is Probable transcriptional regulatory protein Psyr_1407, found in Pseudomonas syringae pv. syringae (strain B728a).